The chain runs to 776 residues: MPVSTRASAAGGQPWSSAAPAPASAPGRGGARREILTNHHHHGLKEKMRALTLFYEQHKQQLASSQGGGARGRRSIQYAVGEVGGDENGRNAEEEDDVGRKRHDAVPAAVLRENMAPPEERAPPPPPAPPPKSSHVVVFSRQADPTEKENVSHGGIATMSCPIKKAAPALPAPAARKLSLGGGMAARLKTAGEAGAGNGDAAGSRIMVFVRLRPMSRKEKDAGSRSCVKIVNKKDVYLTEFASETDYLRLKRVRGRHFCFDSSFPDTTTQAEVYSTTTSDLVEGVLQGRNGTVFCYGATGAGKTYTMLGTMESPGVMVLAIKDLFTKVRQRSHDGNHSIQLSYLEVYNETVRDLLSPGRPLLLREDKQGTVAAGLTHYRAYSTDEVMKLLQQGNQNRTTEPTRVNETSSRSHAILQVIVEYRSIDGGSIVTRVGKLSLIDLAGSERALATDQRTQRSIEGANINRSLLALSSCINALVEGKKHIPYRNSKLTQLLKDSLGGSCNTVMIANISPSNLSFGETQNTLHWADRAKEIKTKALTTANEEVLRVTDSETDQAKLVLELQKENSELRQQLARQQQKLLTVQAQTLASNASPQQSPAPSAQISTPCSTQRKVKRSILAGNCFNTPDSKRPAAENAQVRDLQRKVKAMEAEIEKMKKEHLLQLKQKDEFIRDLINRKTSNVPEAATCERRVATRASVRKAQKDAAAAGELRSPSHRFTSPVPTAKKRTFWDIGGNSPSTLAVNGRKTRSHVAAETPKGTSMLLQPGFARQRAIH.

Disordered stretches follow at residues 1–31 (MPVS…RGGA) and 80–135 (VGEV…KSSH). Residues 7 to 26 (ASAAGGQPWSSAAPAPASAP) are compositionally biased toward low complexity. The segment covering 123–132 (PPPPPAPPPK) has biased composition (pro residues). The 330-residue stretch at 205-534 (RIMVFVRLRP…LHWADRAKEI (330 aa)) folds into the Kinesin motor domain. 297-304 (GATGAGKT) contacts ATP. Positions 554–592 (TDQAKLVLELQKENSELRQQLARQQQKLLTVQAQTLASN) form a coiled coil. The interval 590–611 (ASNASPQQSPAPSAQISTPCST) is disordered. Over residues 593 to 604 (ASPQQSPAPSAQ) the composition is skewed to low complexity. A coiled-coil region spans residues 634 to 671 (AAENAQVRDLQRKVKAMEAEIEKMKKEHLLQLKQKDEF).

It belongs to the TRAFAC class myosin-kinesin ATPase superfamily. Kinesin family. KIN-8 subfamily.

This chain is Kinesin-like protein KIN-8A, found in Oryza sativa subsp. japonica (Rice).